The following is a 520-amino-acid chain: Transactivator/viroplasmin protein (520 aa).

Disordered stretches follow at residues 103–126 (SDFL…SVAP) and 487–520 (EDAS…KQVD).

The protein belongs to the caulimoviridae viroplasmin family.

The protein resides in the host cytoplasm. Its function is as follows. Enhances the ribosomal termination-reinitiation event leading to the translation of major open reading frames on the polycistronic viral RNAs. This Arabidopsis thaliana (Mouse-ear cress) protein is Transactivator/viroplasmin protein.